Reading from the N-terminus, the 556-residue chain is Undecaprenyl phosphate-alpha-4-amino-4-deoxy-L-arabinose arabinosyl transferase (556 aa).

A run of 11 helical transmembrane segments spans residues 5 to 25, 88 to 108, 116 to 136, 179 to 199, 207 to 227, 258 to 278, 296 to 316, 319 to 339, 355 to 375, 384 to 404, and 410 to 430; these read MIKL…LLPL, FASV…ALLL, LLAA…TYSV, FMTK…PVAL, LLLF…PWAL, APFW…LALL, FLLL…KGKL, YILP…SGLA, LAFG…IIMP, LTIV…AVSL, and WGYL…GSIP.

This sequence belongs to the glycosyltransferase 83 family.

The protein resides in the cell inner membrane. It catalyses the reaction 4-amino-4-deoxy-alpha-L-arabinopyranosyl di-trans,octa-cis-undecaprenyl phosphate + lipid IVA = lipid IIA + di-trans,octa-cis-undecaprenyl phosphate.. The protein operates within lipopolysaccharide metabolism; 4-amino-4-deoxy-beta-L-arabinose-lipid A biosynthesis. Catalyzes the transfer of the L-Ara4N moiety of the glycolipid undecaprenyl phosphate-alpha-L-Ara4N to lipid A. The modified arabinose is attached to lipid A and is required for resistance to polymyxin and cationic antimicrobial peptides. In Pectobacterium carotovorum subsp. carotovorum (strain PC1), this protein is Undecaprenyl phosphate-alpha-4-amino-4-deoxy-L-arabinose arabinosyl transferase.